The primary structure comprises 450 residues: tRNA modification GTPase MnmE (450 aa).

Residues Arg20, Glu78, and Lys117 each coordinate (6S)-5-formyl-5,6,7,8-tetrahydrofolate. Residues 211 to 372 form the TrmE-type G domain; that stretch reads GLRMVIVGKP…LEESIYRETQ (162 aa). Asn221 is a K(+) binding site. GTP is bound by residues 221–226, 240–246, 265–268, 326–329, and 353–355; these read NVGKST, TDIPGTT, DTAG, NKVD, and SAL. Position 225 (Ser225) interacts with Mg(2+). Residues Thr240, Ile242, and Thr245 each contribute to the K(+) site. Mg(2+) is bound at residue Thr246. (6S)-5-formyl-5,6,7,8-tetrahydrofolate is bound at residue Lys450.

Belongs to the TRAFAC class TrmE-Era-EngA-EngB-Septin-like GTPase superfamily. TrmE GTPase family. As to quaternary structure, homodimer. Heterotetramer of two MnmE and two MnmG subunits. The cofactor is K(+).

The protein resides in the cytoplasm. In terms of biological role, exhibits a very high intrinsic GTPase hydrolysis rate. Involved in the addition of a carboxymethylaminomethyl (cmnm) group at the wobble position (U34) of certain tRNAs, forming tRNA-cmnm(5)s(2)U34. The sequence is that of tRNA modification GTPase MnmE from Thermotoga maritima (strain ATCC 43589 / DSM 3109 / JCM 10099 / NBRC 100826 / MSB8).